A 1020-amino-acid polypeptide reads, in one-letter code: Nucleotide-binding oligomerization domain-containing protein 2 (1020 aa).

2 CARD domains span residues 6 to 104 (CDMC…GSWD) and 106 to 200 (HSLH…AECQ). The short motif at 43-57 (WDVLSREDYEGLSLP) is the ATG16L1-binding motif element. Positions 219, 232, 233, 282, 283, 284, 285, 286, and 287 each coordinate ADP. The segment at 221–254 (DGSENLCLEDIYTENILELQTEVGTAGALQKSPA) is required for CARD9 binding. The region spanning 273 to 600 (DTILVVGEAG…AAFYLAVSAD (328 aa)) is the NACHT domain. Cys375 is lipidated: S-palmitoyl cysteine. Residue His583 coordinates ADP. LRR repeat units follow at residues 685 to 709 (ARAR…VPGE), 726 to 749 (LYEM…HLKL), 766 to 792 (LQHL…QLRP), 794 to 817 (LGVC…TLVE), 822 to 845 (CEQL…SMAK), 850 to 873 (KQNF…VLAQ), 906 to 929 (HQNL…ALAL), 934 to 962 (NKSL…LKRN), 963 to 985 (STLK…ALLQ), and 1005 to 1019 (LEEI…ARLL).

The protein belongs to the NOD1-NOD2 family. As to quaternary structure, homooligomer: homooligomerizes following muramyl dipeptide (MDP)-binding, promoting RIPK2 recruitment. Interacts (via CARD domain) with RIPK2 (via CARD domain). Following RIPK2 recruitment, RIPK2 homooligomerizes via its CARD domain and forms long filaments named RIPosomes. Interacts (via CARD domain) with ubiquitin; inhibiting interaction with RIPK2. Component of a signaling complex consisting of ARHGEF2, NOD2 and RIPK2. Interacts with ANKRD17 (via N-terminus). Interacts with HSPA1A; the interaction enhances NOD2 stability. Interacts (via both CARD domains) with HSP90; the interaction enhances NOD2 stability. Interacts (via CARD domain) with SOCS3; the interaction promotes NOD2 degradation. Interacts (via CARD domain) with ERBIN; the interaction inhibits activation of NOD2. Interacts with MAPKBP1; the interaction is enhanced in the presence of muramyl dipeptide (MDP) and inhibits NOD2 homooligomerization and activation. Interacts with INAVA; the interaction takes place upon Pattern recognition receptor (PRR) stimulation. Interacts (via NACHT domain) with CARD9. Interacts (via CARD domain) with CASP1; this interaction leads to IL1B processing. Also interacts with CASP4. Interacts with NLRP1; this interaction is enhanced in the presence of muramyl dipeptide (MDP) and leads to increased IL1B release. Interacts with NLRP12; this interaction promotes degradation of NOD2 through the ubiquitin-proteasome pathway. Interacts with ANKHD1, C10orf67, CHMP5, DOCK7, ENTR1, KRT15, LDOC1, PPP1R12C, PPP2R3B, TRIM41 and VIM. Interacts with MAVS; interaction takes place following single-stranded RNA (ssRNA)-binding. Interacts with ATG16L1. Interacts with Irgm1; promoting Irgm1 'Lys-63'-linked polyubiquitination, which is required for interactions with the core autophagy factors. Palmitoylated by ZDHHC5; palmitoylation is required for proper recruitment to the bacterial entry site and hence for proper signaling upon cognate peptidoglycan detection. Palmitoylation promotes localization to the cell membrane. Palmitoylation protects from SQSTM1/p62-dependent autophagic degradation. In terms of processing, polyubiquitinated by TRIM27, leading to proteasome-mediated degradation. Polyubiquitinated and degraded following muramyl dipeptide (MDP) stimulation, conferring MDP tolerance and preventing septic shock. Post-translationally, degraded via selective autophagy following interaction with Irgm1. Irgm1 promotes NOD2-RIPK2 RIPosome recruitment to autophagosome membranes, promoting their SQSTM1/p62-dependent autophagic degradation. O-glycosylated by OGT, O-GlcNAcylation increases protein stability. In terms of tissue distribution, expressed in monocytes, macrophages, dendritic cells, hepatocytes, preadipocytes, epithelial cells of oral cavity, lung and intestine. In intestine, highly expressed in ileal Paneth cells of the crypt and in intestinal stem cells. Also expressed in neurons of several brain regions including the hypothalamus.

Its subcellular location is the cell membrane. The protein localises to the basolateral cell membrane. It is found in the cytoplasm. The protein resides in the mitochondrion. ADP-binding promotes an inactive closed conformation. In terms of biological role, pattern recognition receptor (PRR) that detects bacterial peptidoglycan fragments and other danger signals and plays an important role in gastrointestinal immunity. Specifically activated by muramyl dipeptide (MDP), a fragment of bacterial peptidoglycan found in every bacterial peptidoglycan type. NOD2 specifically recognizes and binds 6-O-phospho-MDP, the phosphorylated form of MDP, which is generated by NAGK. 6-O-phospho-MDP-binding triggers oligomerization that facilitates the binding and subsequent activation of the proximal adapter receptor-interacting RIPK2. Following recruitment, RIPK2 undergoes 'Met-1'- (linear) and 'Lys-63'-linked polyubiquitination by E3 ubiquitin-protein ligases XIAP, BIRC2, BIRC3 and the LUBAC complex, becoming a scaffolding protein for downstream effectors, triggering activation of the NF-kappa-B and MAP kinases signaling. This in turn leads to the transcriptional activation of hundreds of genes involved in immune response. Its ability to detect bacterial MDP plays a central role in maintaining the equilibrium between intestinal microbiota and host immune responses to control inflammation. An imbalance in this relationship results in dysbiosis, whereby pathogenic bacteria prevail on commensals, causing damage in the intestinal epithelial barrier as well as allowing bacterial invasion and inflammation. Acts as a regulator of appetite by sensing MDP in a subset of brain neurons: microbiota-derived MDP reach the brain, where they bind and activate NOD2 in inhibitory hypothalamic neurons, decreasing neuronal activity, thereby regulating satiety and body temperature. NOD2-dependent MDP-sensing of bacterial cell walls in the intestinal epithelial compartment contributes to sustained postnatal growth upon undernutrition. Also plays a role in antiviral response by acting as a sensor of single-stranded RNA (ssRNA) from viruses: upon ssRNA-binding, interacts with MAVS, leading to activation of interferon regulatory factor-3/IRF3 and expression of type I interferon. Also acts as a regulator of autophagy in dendritic cells via its interaction with ATG16L1, possibly by recruiting ATG16L1 at the site of bacterial entry. NOD2 activation in the small intestine crypt also contributes to intestinal stem cells survival and function: acts by promoting mitophagy via its association with ATG16L1. In addition to its main role in innate immunity, also regulates the adaptive immune system by acting as regulator of helper T-cell and regulatory T-cells (Tregs). Besides recognizing pathogens, also involved in the endoplasmic reticulum stress response: acts by sensing and binding to the cytosolic metabolite sphingosine-1-phosphate generated in response to endoplasmic reticulum stress, initiating an inflammation process that leads to activation of the NF-kappa-B and MAP kinases signaling. May also be involved in NLRP1 activation following activation by MDP, leading to CASP1 activation and IL1B release in macrophages. The chain is Nucleotide-binding oligomerization domain-containing protein 2 from Mus musculus (Mouse).